The sequence spans 520 residues: Apolipoprotein N-acyltransferase (520 aa).

The next 7 membrane-spanning stretches (helical) occupy residues 12–32 (IFTY…FSPF), 33–53 (DYWG…KTAE), 58–78 (LWSA…WVHV), 93–113 (VLVL…AYLI), 122–142 (AMFP…FTGF), 168–188 (VTFF…VLLI), and 193–213 (WNVV…SAYS). One can recognise a CN hydrolase domain in the interval 232–479 (AQGNIEQNLK…ETTLTHKVAA (248 aa)). Glu-272 functions as the Proton acceptor in the catalytic mechanism. Residue Lys-338 is part of the active site. Residue Cys-390 is the Nucleophile of the active site. Residues 484–504 (TPYAVFGNTAIYGLSLLLLLM) traverse the membrane as a helical segment.

The protein belongs to the CN hydrolase family. Apolipoprotein N-acyltransferase subfamily.

It localises to the cell inner membrane. It catalyses the reaction N-terminal S-1,2-diacyl-sn-glyceryl-L-cysteinyl-[lipoprotein] + a glycerophospholipid = N-acyl-S-1,2-diacyl-sn-glyceryl-L-cysteinyl-[lipoprotein] + a 2-acyl-sn-glycero-3-phospholipid + H(+). Its pathway is protein modification; lipoprotein biosynthesis (N-acyl transfer). Functionally, catalyzes the phospholipid dependent N-acylation of the N-terminal cysteine of apolipoprotein, the last step in lipoprotein maturation. In Pasteurella multocida (strain Pm70), this protein is Apolipoprotein N-acyltransferase.